Reading from the N-terminus, the 512-residue chain is Ferredoxin--nitrite reductase (512 aa).

Residues Cys396, Cys402, Cys437, and Cys441 each coordinate [4Fe-4S] cluster. Cys441 serves as a coordination point for siroheme.

The protein belongs to the nitrite and sulfite reductase 4Fe-4S domain family.

It carries out the reaction 6 oxidized [2Fe-2S]-[ferredoxin] + NH4(+) + 2 H2O = nitrite + 6 reduced [2Fe-2S]-[ferredoxin] + 8 H(+). This chain is Ferredoxin--nitrite reductase (nirA), found in Synechococcus elongatus (strain ATCC 33912 / PCC 7942 / FACHB-805) (Anacystis nidulans R2).